The primary structure comprises 342 residues: MTVKPLRDVTPKPLEGEERLEQSLRPATFDDYVGQVKIVDNVKVYAAAARQRGESLDHVLLSGPPGLGKTSLAHILARELGVTLHVTSGPALVKKGDLAGLLTALAPRDILFIDEIHRLSPAVEEALYPAMEDYRFDVVLGAGLGAQTMEMKLERFTLVGATTRTGLLASPLRDRFPIQERLEYYGPAELKEIAVRAARKLGLPVDEDGAEELARRARGTPRIAIRLLQRARDFAQVEGDGRLTREVVDRTLRRLEVDARGLDAMDRRILAAVIDTFGGGPVGIDAVAAAVGEESGTLEDVYEPFLVREGYLARTPRGRVALPAAYAHLGRDRSGGKQGSLV.

The large ATPase domain (RuvB-L) stretch occupies residues 1–185 (MTVKPLRDVT…FPIQERLEYY (185 aa)). ATP-binding positions include L24, R25, G66, K69, T70, S71, 132–134 (EDY), R175, Y185, and R222. Position 70 (T70) interacts with Mg(2+). Residues 186–256 (GPAELKEIAV…VVDRTLRRLE (71 aa)) are small ATPAse domain (RuvB-S). Residues 259–342 (ARGLDAMDRR…RSGGKQGSLV (84 aa)) form a head domain (RuvB-H) region. Residues R314 and R319 each coordinate DNA.

It belongs to the RuvB family. In terms of assembly, homohexamer. Forms an RuvA(8)-RuvB(12)-Holliday junction (HJ) complex. HJ DNA is sandwiched between 2 RuvA tetramers; dsDNA enters through RuvA and exits via RuvB. An RuvB hexamer assembles on each DNA strand where it exits the tetramer. Each RuvB hexamer is contacted by two RuvA subunits (via domain III) on 2 adjacent RuvB subunits; this complex drives branch migration. In the full resolvosome a probable DNA-RuvA(4)-RuvB(12)-RuvC(2) complex forms which resolves the HJ.

It is found in the cytoplasm. It carries out the reaction ATP + H2O = ADP + phosphate + H(+). In terms of biological role, the RuvA-RuvB-RuvC complex processes Holliday junction (HJ) DNA during genetic recombination and DNA repair, while the RuvA-RuvB complex plays an important role in the rescue of blocked DNA replication forks via replication fork reversal (RFR). RuvA specifically binds to HJ cruciform DNA, conferring on it an open structure. The RuvB hexamer acts as an ATP-dependent pump, pulling dsDNA into and through the RuvAB complex. RuvB forms 2 homohexamers on either side of HJ DNA bound by 1 or 2 RuvA tetramers; 4 subunits per hexamer contact DNA at a time. Coordinated motions by a converter formed by DNA-disengaged RuvB subunits stimulates ATP hydrolysis and nucleotide exchange. Immobilization of the converter enables RuvB to convert the ATP-contained energy into a lever motion, pulling 2 nucleotides of DNA out of the RuvA tetramer per ATP hydrolyzed, thus driving DNA branch migration. The RuvB motors rotate together with the DNA substrate, which together with the progressing nucleotide cycle form the mechanistic basis for DNA recombination by continuous HJ branch migration. Branch migration allows RuvC to scan DNA until it finds its consensus sequence, where it cleaves and resolves cruciform DNA. In Anaeromyxobacter dehalogenans (strain 2CP-C), this protein is Holliday junction branch migration complex subunit RuvB.